The chain runs to 488 residues: UDP-N-acetylmuramate--L-alanine ligase (488 aa).

129-135 is a binding site for ATP; the sequence is GSHGKTT.

Belongs to the MurCDEF family.

It is found in the cytoplasm. It catalyses the reaction UDP-N-acetyl-alpha-D-muramate + L-alanine + ATP = UDP-N-acetyl-alpha-D-muramoyl-L-alanine + ADP + phosphate + H(+). It functions in the pathway cell wall biogenesis; peptidoglycan biosynthesis. Cell wall formation. This is UDP-N-acetylmuramate--L-alanine ligase from Prochlorococcus marinus (strain MIT 9303).